The following is a 117-amino-acid chain: Immunoglobulin kappa variable 1D-17 (117 aa).

Residues 1–22 (MDMRVPAQLLGLLLLWFPGARC) form the signal peptide. The segment at 23-45 (NIQMTQSPSAMSASVGDRVTITC) is framework-1. An Ig-like domain is found at 23–117 (NIQMTQSPSA…YYCLQHNSYP (95 aa)). Residues cysteine 45 and cysteine 110 are joined by a disulfide bond. The tract at residues 46 to 56 (RARQGISNYLA) is complementarity-determining-1. The segment at 57-71 (WFQQKPGKVPKHLIY) is framework-2. The complementarity-determining-2 stretch occupies residues 72-78 (AASSLQS). The segment at 79 to 110 (GVPSRFSGSGSGTEFTLTISSLQPEDFATYYC) is framework-3. The segment at 111-117 (LQHNSYP) is complementarity-determining-3.

In terms of assembly, immunoglobulins are composed of two identical heavy chains and two identical light chains; disulfide-linked.

It localises to the secreted. It is found in the cell membrane. Functionally, v region of the variable domain of immunoglobulin light chains that participates in the antigen recognition. Immunoglobulins, also known as antibodies, are membrane-bound or secreted glycoproteins produced by B lymphocytes. In the recognition phase of humoral immunity, the membrane-bound immunoglobulins serve as receptors which, upon binding of a specific antigen, trigger the clonal expansion and differentiation of B lymphocytes into immunoglobulins-secreting plasma cells. Secreted immunoglobulins mediate the effector phase of humoral immunity, which results in the elimination of bound antigens. The antigen binding site is formed by the variable domain of one heavy chain, together with that of its associated light chain. Thus, each immunoglobulin has two antigen binding sites with remarkable affinity for a particular antigen. The variable domains are assembled by a process called V-(D)-J rearrangement and can then be subjected to somatic hypermutations which, after exposure to antigen and selection, allow affinity maturation for a particular antigen. The polypeptide is Immunoglobulin kappa variable 1D-17 (Homo sapiens (Human)).